The sequence spans 148 residues: Hemoglobin subunit beta (148 aa).

Positions 3–148 (XWTDXERAAI…VVSALGRQYH (146 aa)) constitute a Globin domain. H64 and H93 together coordinate heme b.

The protein belongs to the globin family. Heterotetramer of two alpha chains and two beta chains. As to expression, red blood cells.

Its function is as follows. Involved in oxygen transport from gills to the various peripheral tissues. This Decapterus maruadsi (Japanese scad) protein is Hemoglobin subunit beta (hbb).